A 305-amino-acid chain; its full sequence is Putative glutamine--fructose-6-phosphate aminotransferase [isomerizing] (305 aa).

The active-site Nucleophile; for GATase activity is the cysteine 2. The region spanning 2 to 305 (CGIFGYCNFL…RLCITSAVCE (304 aa)) is the Glutamine amidotransferase type-2 domain.

The enzyme catalyses D-fructose 6-phosphate + L-glutamine = D-glucosamine 6-phosphate + L-glutamate. It participates in nucleotide-sugar biosynthesis; UDP-N-acetyl-alpha-D-glucosamine biosynthesis; alpha-D-glucosamine 6-phosphate from D-fructose 6-phosphate: step 1/1. Its function is as follows. Involved in amino sugar synthesis (formation of chitin, supplies the amino sugars of asparagine-linked oligosaccharides of glycoproteins). This chain is Putative glutamine--fructose-6-phosphate aminotransferase [isomerizing], found in Saccharomyces cerevisiae (strain Lalvin EC1118 / Prise de mousse) (Baker's yeast).